The following is a 300-amino-acid chain: Ribosomal RNA small subunit methyltransferase H (300 aa).

S-adenosyl-L-methionine is bound by residues Gly-36–His-38, Asp-55, Leu-89, Asp-103, and Gln-110.

Belongs to the methyltransferase superfamily. RsmH family.

The protein resides in the cytoplasm. The catalysed reaction is cytidine(1402) in 16S rRNA + S-adenosyl-L-methionine = N(4)-methylcytidine(1402) in 16S rRNA + S-adenosyl-L-homocysteine + H(+). Its function is as follows. Specifically methylates the N4 position of cytidine in position 1402 (C1402) of 16S rRNA. In Thermotoga neapolitana (strain ATCC 49049 / DSM 4359 / NBRC 107923 / NS-E), this protein is Ribosomal RNA small subunit methyltransferase H.